The primary structure comprises 459 residues: tRNA-2-methylthio-N(6)-dimethylallyladenosine synthase (459 aa).

Residues 1 to 116 enclose the MTTase N-terminal domain; it reads MRAHLITYGC…IGKALETNER (116 aa). Residues Cys-10, Cys-46, Cys-79, Cys-148, Cys-152, and Cys-155 each contribute to the [4Fe-4S] cluster site. One can recognise a Radical SAM core domain in the interval 134 to 367; the sequence is PQGKLQAHLT…IAKQKEWSAR (234 aa). The TRAM domain occupies 370-433; it reads AAKVGTIQEV…PHMLYGRLIG (64 aa).

It belongs to the methylthiotransferase family. MiaB subfamily. Monomer. [4Fe-4S] cluster is required as a cofactor.

The protein resides in the cytoplasm. It catalyses the reaction N(6)-dimethylallyladenosine(37) in tRNA + (sulfur carrier)-SH + AH2 + 2 S-adenosyl-L-methionine = 2-methylsulfanyl-N(6)-dimethylallyladenosine(37) in tRNA + (sulfur carrier)-H + 5'-deoxyadenosine + L-methionine + A + S-adenosyl-L-homocysteine + 2 H(+). Catalyzes the methylthiolation of N6-(dimethylallyl)adenosine (i(6)A), leading to the formation of 2-methylthio-N6-(dimethylallyl)adenosine (ms(2)i(6)A) at position 37 in tRNAs that read codons beginning with uridine. This Deinococcus geothermalis (strain DSM 11300 / CIP 105573 / AG-3a) protein is tRNA-2-methylthio-N(6)-dimethylallyladenosine synthase.